The chain runs to 195 residues: Peptidyl-tRNA hydrolase (195 aa).

Tyr17 lines the tRNA pocket. His22 acts as the Proton acceptor in catalysis. TRNA is bound by residues Tyr68, Asn70, and Asn116.

This sequence belongs to the PTH family. Monomer.

The protein localises to the cytoplasm. The catalysed reaction is an N-acyl-L-alpha-aminoacyl-tRNA + H2O = an N-acyl-L-amino acid + a tRNA + H(+). In terms of biological role, hydrolyzes ribosome-free peptidyl-tRNAs (with 1 or more amino acids incorporated), which drop off the ribosome during protein synthesis, or as a result of ribosome stalling. Its function is as follows. Catalyzes the release of premature peptidyl moieties from peptidyl-tRNA molecules trapped in stalled 50S ribosomal subunits, and thus maintains levels of free tRNAs and 50S ribosomes. The chain is Peptidyl-tRNA hydrolase from Shewanella sp. (strain MR-4).